We begin with the raw amino-acid sequence, 33 residues long: Brevinin-2Eb (33 aa).

Cysteine 27 and cysteine 33 are disulfide-bonded.

Belongs to the frog skin active peptide (FSAP) family. Brevinin subfamily. As to expression, expressed by the skin glands.

The protein localises to the secreted. Shows antibacterial activity against representative Gram-negative and Gram-positive bacterial species, and hemolytic activity. This Pelophylax lessonae (Pool frog) protein is Brevinin-2Eb.